The sequence spans 222 residues: UPF0758 protein Cpar_0627 (222 aa).

Positions 100–222 constitute an MPN domain; it reads KIQGAQDVFE…WFSFRDHSLL (123 aa). Zn(2+) contacts are provided by His-171, His-173, and Asp-184. The JAMM motif signature appears at 171–184; sequence HNHPSGDVQPSNAD.

Belongs to the UPF0758 family.

In Chlorobaculum parvum (strain DSM 263 / NCIMB 8327) (Chlorobium vibrioforme subsp. thiosulfatophilum), this protein is UPF0758 protein Cpar_0627.